The primary structure comprises 191 residues: 7-methyl-GTP pyrophosphatase (191 aa).

Residue Asp70 is the Proton acceptor of the active site.

Belongs to the Maf family. YceF subfamily. A divalent metal cation serves as cofactor.

The protein localises to the cytoplasm. The catalysed reaction is N(7)-methyl-GTP + H2O = N(7)-methyl-GMP + diphosphate + H(+). Functionally, nucleoside triphosphate pyrophosphatase that hydrolyzes 7-methyl-GTP (m(7)GTP). May have a dual role in cell division arrest and in preventing the incorporation of modified nucleotides into cellular nucleic acids. The sequence is that of 7-methyl-GTP pyrophosphatase from Xanthomonas oryzae pv. oryzae (strain KACC10331 / KXO85).